Reading from the N-terminus, the 520-residue chain is mRNA-capping enzyme subunit beta (520 aa).

A disordered region spans residues 1 to 185 (MNVGSILNDD…PQPVFDDQDD (185 aa)). 2 stretches are compositionally biased toward polar residues: residues 11 to 21 (PPSSGNANGND) and 44 to 56 (ITSM…SDST). Residues 92–108 (SSSSVGSSEHSSARSSP) are compositionally biased toward low complexity. Basic and acidic residues-rich tracts occupy residues 126-135 (PATKTEKKAE) and 149-176 (KLEE…KKEP).

Belongs to the fungal TPase family. As to quaternary structure, heterodimer. The mRNA-capping enzyme is composed of two separate chains alpha and beta, respectively a mRNA guanylyltransferase and an mRNA 5'-triphosphate monophosphatase. Requires Mg(2+) as cofactor.

It is found in the nucleus. It catalyses the reaction a 5'-end triphospho-ribonucleoside in mRNA + H2O = a 5'-end diphospho-ribonucleoside in mRNA + phosphate + H(+). In terms of biological role, first step of mRNA capping. Converts the 5'-triphosphate end of a nascent mRNA chain into a diphosphate end. In Candida albicans (strain SC5314 / ATCC MYA-2876) (Yeast), this protein is mRNA-capping enzyme subunit beta (CET1).